We begin with the raw amino-acid sequence, 573 residues long: MRAKSILKQFLLPRDKNSSEVGKSDSIELFPNDSLHSLYANWHLPGSHMLPLYNPTNISPYEFHSRFNSDQSYKRSPRLSVTKLLTDRWCELSEYYTIYAGSPQFKVTNAITQGLERHSELEYELHQPIDISLLMETLSGSISDAISHFQATIKDVKDPDLLSELDGNPDAAKLAMEWSDHSINRLFSLITTSEAREVLVHGFLNLENSEFVSSIDELKNSQNGNIDIRKVLVSGIVDHFKIENLEDPTDLSLFREIRDYMDYYFDTTIGDKQVIDLTKFLQSVKQFVEEHKSAFSVKTTDVKTRSVNRLPSSISVLEAAKFQTFYYRKMFGLLSNEHQRTENNHFAYYSLLENARVRGIDVDEPLDIVTLVSILRKNYNLFYLDFVKLANGEPIGFEPFDSYNKGRENTGFALDSVFGIAEKCLLAGKPMQLDLIEKINSLEDFNYDEILSPDLIKNWKTAPTLRYLAARCAQFYELFSELLGDHTAVEYHNGRTSQAFHTSESKYTEDVIGEQTRKASTFWNGKRFPIYTRDLSKCNYCDFKPRCMVPNHQLQGDLYRKSLGAKINEFLHS.

[4Fe-4S] cluster-binding residues include Cys90, Cys538, Cys541, and Cys547.

The protein belongs to the EXO5 family. In terms of assembly, monomer. Requires Mg(2+) as cofactor. The cofactor is [4Fe-4S] cluster.

It is found in the mitochondrion. Functionally, single strand DNA specific 5' exonuclease involved in mitochondrial DNA replication and recombination. Releases dinucleotides as main products of catalysis. Has the capacity to slide across 5'double-stranded DNA or 5'RNA sequences and resumes cutting two nucleotides downstream of the double-stranded-to-single-stranded junction or RNA-to-DNA junction, respectively. The chain is Exonuclease V, mitochondrial (EXO5) from Scheffersomyces stipitis (strain ATCC 58785 / CBS 6054 / NBRC 10063 / NRRL Y-11545) (Yeast).